A 479-amino-acid chain; its full sequence is Calcium/calmodulin-dependent protein kinase type II delta chain (479 aa).

A Protein kinase domain is found at 14–272; it reads YQLFEELGKG…ASEALKHPWI (259 aa). ATP contacts are provided by residues 20 to 28 and Lys43; that span reads LGKGAFSVV. Asp136 acts as the Proton acceptor in catalysis. A Phosphothreonine modification is found at Thr287. Phosphoserine occurs at positions 315 and 319. Thr337 is modified (phosphothreonine).

This sequence belongs to the protein kinase superfamily. CAMK Ser/Thr protein kinase family. CaMK subfamily. As to quaternary structure, CAMK2 is composed of four different chains: alpha, beta, gamma, and delta. The different isoforms assemble into homo- or heteromultimeric holoenzymes composed of 8 to 12 subunits.

The enzyme catalyses L-seryl-[protein] + ATP = O-phospho-L-seryl-[protein] + ADP + H(+). The catalysed reaction is L-threonyl-[protein] + ATP = O-phospho-L-threonyl-[protein] + ADP + H(+). Its activity is regulated as follows. Autophosphorylation of CAMK2 plays an important role in the regulation of the kinase activity. Its function is as follows. CaM-kinase II (CAMK2) is a prominent kinase in the central nervous system. This chain is Calcium/calmodulin-dependent protein kinase type II delta chain (CAMK2D), found in Gallus gallus (Chicken).